Reading from the N-terminus, the 552-residue chain is Hydroxylamine reductase (552 aa).

[2Fe-2S] cluster contacts are provided by Cys5, Cys8, Cys20, and Cys27. The hybrid [4Fe-2O-2S] cluster site is built by His251, Glu275, Cys319, Cys407, Cys435, Cys460, Glu494, and Lys496. Cys407 is modified (cysteine persulfide).

Belongs to the HCP family. The cofactor is [2Fe-2S] cluster. Hybrid [4Fe-2O-2S] cluster serves as cofactor.

It localises to the cytoplasm. It carries out the reaction A + NH4(+) + H2O = hydroxylamine + AH2 + H(+). Functionally, catalyzes the reduction of hydroxylamine to form NH(3) and H(2)O. This is Hydroxylamine reductase from Shigella boydii serotype 4 (strain Sb227).